Here is a 619-residue protein sequence, read N- to C-terminus: N-acetylmuramoyl-L-alanine amidase domain-containing protein SAOUHSC_02979 (619 aa).

An N-terminal signal peptide occupies residues 1-27 (MPKNKILIYLLSTTLVLPTLVSPTAYA). Disordered regions lie at residues 25–83 (AYAD…TIDD), 134–226 (SDYE…SMSD), and 238–290 (EDAK…NQKD). 3 stretches are compositionally biased toward basic and acidic residues: residues 30-65 (PQKD…KADK), 73-82 (NNDKKFKTID), and 137-146 (EQPRNGEKST). Positions 147–156 (NDSNKNSDNS) are enriched in low complexity. A compositionally biased stretch (basic and acidic residues) spans 157–175 (IKNDTDTQSSKQDKADNQK). Residues 176–192 (APKSNNTKPSTSNKQPN) show a composition bias toward polar residues. Residues 214-226 (QKSSSKDNQSMSD) show a composition bias toward low complexity. Over residues 238–260 (EDAKKTQKDYASQSKKDKNEKSN) the composition is skewed to basic and acidic residues. Residues 327–468 (IAKDAHRIGQ…LNSIIKHYQL (142 aa)) are N-acetylmuramoyl-L-alanine amidase. The Peptidase C51 domain occupies 488–617 (DYDDSSDEFK…AAAEELSYIT (130 aa)).

This sequence in the N-terminal section; belongs to the N-acetylmuramoyl-L-alanine amidase 2 family.

The protein resides in the secreted. The sequence is that of N-acetylmuramoyl-L-alanine amidase domain-containing protein SAOUHSC_02979 from Staphylococcus aureus (strain NCTC 8325 / PS 47).